The primary structure comprises 1388 residues: Retrotransposon Gag-like protein 9 (1388 aa).

5 disordered regions span residues 491–511 (ATAS…GAMS), 769–790 (TPLM…ASSS), 895–918 (GGVS…RRPS), 1100–1138 (TDSG…PKEV), and 1336–1388 (AMGN…HTNK). Over residues 1103–1123 (GEASTSHINITASGSKPTSHM) the composition is skewed to polar residues. Residues 1359–1374 (YLKEHGDPQEGLHDHL) are compositionally biased toward basic and acidic residues.

This chain is Retrotransposon Gag-like protein 9, found in Homo sapiens (Human).